The following is a 348-amino-acid chain: Heat-inducible transcription repressor HrcA (348 aa).

Belongs to the HrcA family.

Negative regulator of class I heat shock genes (grpE-dnaK-dnaJ and groELS operons). Prevents heat-shock induction of these operons. This is Heat-inducible transcription repressor HrcA from Syntrophobacter fumaroxidans (strain DSM 10017 / MPOB).